Consider the following 554-residue polypeptide: Afadin- and alpha-actinin-binding protein A (554 aa).

Coiled coils occupy residues 122–287 (LEYL…SQRK) and 359–449 (ENGL…AIRL). The disordered stretch occupies residues 508 to 528 (LASSGDYSRRPSKALPITSSS).

It belongs to the ADIP family. As to quaternary structure, interacts with WRAP73.

It is found in the cell junction. It localises to the adherens junction. The protein localises to the cytoplasm. The protein resides in the cytoskeleton. Its subcellular location is the microtubule organizing center. It is found in the centrosome. It localises to the centriolar satellite. Belongs to an adhesion system, which plays a role in the organization of homotypic, interneuronal and heterotypic cell-cell adherens junctions (AJs). Involved in cell movement. Acts as a centrosome maturation factor, probably by maintaining the integrity of the pericentriolar material and proper microtubule nucleation at mitotic spindle poles. The function seems to implicate at least in part WRAP73; the SSX2IP:WRAP73 complex is proposed to act as regulator of spindle anchoring at the mitotic centrosome. In Xenopus laevis (African clawed frog), this protein is Afadin- and alpha-actinin-binding protein A (ssx2ip-a).